The sequence spans 99 residues: Putative endopeptidase RzpR (99 aa).

The polypeptide is Putative endopeptidase RzpR (rzpR) (Escherichia coli (strain K12)).